The primary structure comprises 140 residues: Inner membrane protein YphA (140 aa).

The Cytoplasmic portion of the chain corresponds to 1–13; the sequence is MNTLRYFDFGAAR. Residues 14–34 traverse the membrane as a helical segment; the sequence is PVLLLIARIAVVLIFIIFGFP. Over 35 to 56 the chain is Periplasmic; sequence KMMGFDGTVQYMASLGAPMPML. The helical transmembrane segment at 57 to 77 threads the bilayer; the sequence is AAIIAVVMEVPAAILIVLGFF. Residues 78 to 79 lie on the Cytoplasmic side of the membrane; the sequence is TR. A helical membrane pass occupies residues 80–100; it reads PLAVLFIFYTLGTAVIGHHYW. Residues 101–116 are Periplasmic-facing; it reads DMTGDAVGPNMINFWK. A helical membrane pass occupies residues 117-137; that stretch reads NVSIAGAFLLLAITGPGAISL. Residues 138–140 are Cytoplasmic-facing; it reads DRR.

The protein belongs to the DoxX family.

It is found in the cell inner membrane. The protein is Inner membrane protein YphA (yphA) of Escherichia coli (strain K12).